The sequence spans 258 residues: Triosephosphate isomerase (258 aa).

Substrate is bound at residue 11-13 (NWK). Histidine 101 (electrophile) is an active-site residue. Residue glutamate 173 is the Proton acceptor of the active site. Residues glycine 179, serine 219, and 240–241 (GG) each bind substrate.

It belongs to the triosephosphate isomerase family. As to quaternary structure, homodimer.

It is found in the cytoplasm. It catalyses the reaction D-glyceraldehyde 3-phosphate = dihydroxyacetone phosphate. It participates in carbohydrate biosynthesis; gluconeogenesis. The protein operates within carbohydrate degradation; glycolysis; D-glyceraldehyde 3-phosphate from glycerone phosphate: step 1/1. Functionally, involved in the gluconeogenesis. Catalyzes stereospecifically the conversion of dihydroxyacetone phosphate (DHAP) to D-glyceraldehyde-3-phosphate (G3P). In Streptomyces avermitilis (strain ATCC 31267 / DSM 46492 / JCM 5070 / NBRC 14893 / NCIMB 12804 / NRRL 8165 / MA-4680), this protein is Triosephosphate isomerase.